We begin with the raw amino-acid sequence, 157 residues long: Heat shock protein beta-9 (157 aa).

Over residues 1 to 17 (MQRVGSSLPSGSQSASQ) the composition is skewed to low complexity. 2 disordered regions span residues 1–20 (MQRV…QCPS) and 136–157 (PPSE…KKLA). The sHSP domain maps to 35-148 (QRLTEDAAAV…EAQTGPASRF (114 aa)). Residues 148 to 157 (FRSRGSKKLA) show a composition bias toward basic residues.

Belongs to the small heat shock protein (HSP20) family.

Its subcellular location is the cytoplasm. It is found in the nucleus. In Bos taurus (Bovine), this protein is Heat shock protein beta-9 (HSPB9).